The following is a 157-amino-acid chain: Eukaryotic translation initiation factor 5A-1 (157 aa).

The residue at position 2 (Ser-2) is an N-acetylserine. At Ser-2 the chain carries Phosphoserine. Residues Thr-7 and Thr-10 each carry the phosphothreonine modification. Lys-51 is modified (hypusine). Ser-74 is modified (phosphoserine). Lys-86 is covalently cross-linked (Glycyl lysine isopeptide (Lys-Gly) (interchain with G-Cter in ubiquitin)).

Belongs to the eIF-5A family. Homodimer. Binds to 80S ribosomes. Actively translating ribosomes show mutually exclusive binding of eIF5a (HYP2 or ANB1) and EFT1/eEF2. Interacts with DYS1 and LIA1. Post-translationally, lys-51 undergoes hypusination, a unique post-translational modification that consists in the addition of a butylamino group from spermidine to lysine side chain, leading to the formation of the unusual amino acid hypusine. eIF-5As are the only known proteins to undergo this modification, which is essential for their function.

The protein localises to the cytoplasm. Translation factor that promotes translation elongation and termination, particularly upon ribosome stalling at specific amino acid sequence contexts. Binds between the exit (E) and peptidyl (P) site of the ribosome and promotes rescue of stalled ribosome: specifically required for efficient translation of polyproline-containing peptides as well as other motifs that stall the ribosome. Acts as a ribosome quality control (RQC) cofactor by joining the RQC complex to facilitate peptidyl transfer during CAT tailing step. Involved in actin dynamics and cell cycle progression, mRNA decay and probably in a pathway involved in stress response and maintenance of cell wall integrity. In Saccharomyces cerevisiae (strain ATCC 204508 / S288c) (Baker's yeast), this protein is Eukaryotic translation initiation factor 5A-1 (HYP2).